Consider the following 581-residue polypeptide: Ketol-acid reductoisomerase, chloroplastic (581 aa).

A chloroplast-targeting transit peptide spans methionine 1 to valine 50. The KARI N-terminal Rossmann domain maps to valine 92–threonine 290. Residues glycine 113–glutamine 120, arginine 146–serine 151, and serine 185–glutamine 189 contribute to the NADP(+) site. The active site involves histidine 210. KARI C-terminal knotted domains lie at threonine 291 to glycine 439 and aspartate 440 to leucine 576. Aspartate 299, glutamate 303, glutamate 476, and glutamate 480 together coordinate Mg(2+). Position 502 (serine 502) interacts with substrate.

This sequence belongs to the ketol-acid reductoisomerase family. In terms of assembly, homodimer. It depends on Mg(2+) as a cofactor.

The protein resides in the plastid. Its subcellular location is the chloroplast. The enzyme catalyses (2R)-2,3-dihydroxy-3-methylbutanoate + NADP(+) = (2S)-2-acetolactate + NADPH + H(+). It carries out the reaction (2R,3R)-2,3-dihydroxy-3-methylpentanoate + NADP(+) = (S)-2-ethyl-2-hydroxy-3-oxobutanoate + NADPH + H(+). It functions in the pathway amino-acid biosynthesis; L-isoleucine biosynthesis; L-isoleucine from 2-oxobutanoate: step 2/4. Its pathway is amino-acid biosynthesis; L-valine biosynthesis; L-valine from pyruvate: step 2/4. The polypeptide is Ketol-acid reductoisomerase, chloroplastic (PGAAIR) (Pisum sativum (Garden pea)).